A 237-amino-acid chain; its full sequence is Fibroblast growth factor 3 (237 aa).

The signal sequence occupies residues 1-21 (MVIIWILLLSFISCGPQVSWA). Residue Asn-83 is glycosylated (N-linked (GlcNAc...) asparagine).

It belongs to the heparin-binding growth factors family.

In terms of biological role, plays an important role in the regulation of embryonic development, cell proliferation, and cell differentiation. The protein is Fibroblast growth factor 3 (fgf3) of Xenopus laevis (African clawed frog).